The sequence spans 396 residues: Tryptophan synthase beta chain (396 aa).

K86 carries the post-translational modification N6-(pyridoxal phosphate)lysine.

Belongs to the TrpB family. In terms of assembly, tetramer of two alpha and two beta chains. Pyridoxal 5'-phosphate is required as a cofactor.

It carries out the reaction (1S,2R)-1-C-(indol-3-yl)glycerol 3-phosphate + L-serine = D-glyceraldehyde 3-phosphate + L-tryptophan + H2O. Its pathway is amino-acid biosynthesis; L-tryptophan biosynthesis; L-tryptophan from chorismate: step 5/5. In terms of biological role, the beta subunit is responsible for the synthesis of L-tryptophan from indole and L-serine. The sequence is that of Tryptophan synthase beta chain from Aliivibrio fischeri (strain MJ11) (Vibrio fischeri).